Here is a 163-residue protein sequence, read N- to C-terminus: Phosphopantetheine adenylyltransferase (163 aa).

Serine 10 contributes to the substrate binding site. Residues 10–11 (SF) and histidine 18 each bind ATP. Positions 42, 74, and 88 each coordinate substrate. ATP-binding positions include 89-91 (GLR), glutamate 99, and 124-130 (YSFLSSS).

The protein belongs to the bacterial CoaD family. Homohexamer. The cofactor is Mg(2+).

The protein resides in the cytoplasm. It carries out the reaction (R)-4'-phosphopantetheine + ATP + H(+) = 3'-dephospho-CoA + diphosphate. Its pathway is cofactor biosynthesis; coenzyme A biosynthesis; CoA from (R)-pantothenate: step 4/5. Its function is as follows. Reversibly transfers an adenylyl group from ATP to 4'-phosphopantetheine, yielding dephospho-CoA (dPCoA) and pyrophosphate. The protein is Phosphopantetheine adenylyltransferase of Bacillus cereus (strain G9842).